Reading from the N-terminus, the 281-residue chain is Transcription factor HES-1 (281 aa).

The disordered stretch occupies residues 1–44 (MPADIMEKNSSSPVAATPASVNTTPDKPKTASEHRKSSKPIMEK). Residues 10 to 21 (SSSPVAATPASV) are compositionally biased toward low complexity. Basic and acidic residues predominate over residues 26–35 (DKPKTASEHR). A bHLH domain is found at 34-91 (HRKSSKPIMEKRRRARINESLSQLKTLILDALKKDSSRHSKLEKADILEMTVKHLRNL). In terms of domain architecture, Orange spans 110–143 (YRAGFSECMNEVTRFLSTCEGVNTEVRTRLLGHL). Disordered regions lie at residues 158–206 (QAHP…PCKL) and 255–281 (TSVG…PWRN). Pro residues-rich tracts occupy residues 164–174 (QAPPPPPPSGP) and 182–201 (FAPP…PPGS). Residues 255–272 (TSVGPNAVSPSSGSSLTA) show a composition bias toward polar residues. The WRPW motif motif lies at 276–279 (WRPW).

As to quaternary structure, interacts with SIRT1. Interacts weakly with TLE2. Interacts with HES6. Transcription repression requires formation of a complex with a corepressor protein of the Groucho/TLE family. Interacts (via WPRW motif) with TLE1. Interacts with an FA complex, composed of FANCA, FANCF, FANCG and FANCL, but not of FANCC, nor FANCE. As to expression, present in all tissues examined but highest in epithelial cells and in mesoderm-derived tissues such as embryonal muscle cells.

Its subcellular location is the nucleus. Its function is as follows. Transcriptional repressor of genes that require a bHLH protein for their transcription. May act as a negative regulator of myogenesis by inhibiting the functions of MYOD1 and ASH1. Binds DNA on N-box motifs: 5'-CACNAG-3' with high affinity and on E-box motifs: 5'-CANNTG-3' with low affinity. May play a role in a functional FA core complex response to DNA cross-link damage, being required for the stability and nuclear localization of FA core complex proteins, as well as for FANCD2 monoubiquitination in response to DNA damage. The sequence is that of Transcription factor HES-1 (Hes1) from Rattus norvegicus (Rat).